Consider the following 561-residue polypeptide: Transmembrane protein 151B (561 aa).

Over residues 1–10 (MSPPGSAAGE) the composition is skewed to low complexity. Positions 1–42 (MSPPGSAAGESAGGGGGGGGSGVPEEPMASADEGPAREEQRP) are disordered. A compositionally biased stretch (gly residues) spans 11-22 (SAGGGGGGGGSG). 2 consecutive transmembrane segments (helical) span residues 59-79 (CLLL…CHVT) and 106-126 (YVYI…VECW). Over residues 489 to 507 (VNEASCPTEQTRLSSQASM) the composition is skewed to polar residues. Residues 489-523 (VNEASCPTEQTRLSSQASMRDNEEDEDEEEAGPPP) form a disordered region. Positions 510–519 (NEEDEDEEEA) are enriched in acidic residues.

Belongs to the TMEM151 family.

The protein localises to the membrane. In Mus musculus (Mouse), this protein is Transmembrane protein 151B (Tmem151b).